A 76-amino-acid polypeptide reads, in one-letter code: Putative cation transport regulator ChaB (76 aa).

The protein belongs to the ChaB family. In terms of assembly, monomer.

Functionally, might be a regulator of the sodium-potassium/proton antiporter ChaA. This Escherichia coli O157:H7 protein is Putative cation transport regulator ChaB.